The sequence spans 318 residues: tRNA-dihydrouridine(16) synthase (318 aa).

Residues 7-9 (PME) and Q68 each bind FMN. C98 (proton donor) is an active-site residue. Residues K139, 200-202 (NGE), and 224-225 (CR) contribute to the FMN site.

It belongs to the Dus family. DusC subfamily. It depends on FMN as a cofactor.

It catalyses the reaction 5,6-dihydrouridine(16) in tRNA + NADP(+) = uridine(16) in tRNA + NADPH + H(+). The catalysed reaction is 5,6-dihydrouridine(16) in tRNA + NAD(+) = uridine(16) in tRNA + NADH + H(+). Its function is as follows. Catalyzes the synthesis of 5,6-dihydrouridine (D), a modified base found in the D-loop of most tRNAs, via the reduction of the C5-C6 double bond in target uridines. Specifically modifies U16 in tRNAs. This Vibrio vulnificus (strain CMCP6) protein is tRNA-dihydrouridine(16) synthase.